Consider the following 92-residue polypeptide: Small ribosomal subunit protein uS19c (92 aa).

The protein belongs to the universal ribosomal protein uS19 family.

The protein localises to the plastid. The protein resides in the chloroplast. In terms of biological role, protein S19 forms a complex with S13 that binds strongly to the 16S ribosomal RNA. This chain is Small ribosomal subunit protein uS19c, found in Phaseolus angularis (Azuki bean).